The primary structure comprises 258 residues: Ribose-5-phosphate isomerase (258 aa).

This sequence belongs to the ribose 5-phosphate isomerase family.

The protein resides in the cytoplasm. The catalysed reaction is aldehydo-D-ribose 5-phosphate = D-ribulose 5-phosphate. Its pathway is carbohydrate degradation; pentose phosphate pathway; D-ribose 5-phosphate from D-ribulose 5-phosphate (non-oxidative stage): step 1/1. This Saccharomyces cerevisiae (strain YJM789) (Baker's yeast) protein is Ribose-5-phosphate isomerase (RKI1).